Consider the following 373-residue polypeptide: Nuclear migration protein JNM1 (373 aa).

Residues 33–53 (EVKEDGQQEEQEEASSRKDGL) are disordered. Position 91 is a phosphoserine (Ser-91). Coiled coils occupy residues 114-139 (KIEN…LATE), 200-245 (EDRK…EFEN), and 331-367 (WLKA…EDEA).

As to quaternary structure, component of the dynactin complex composed of at least ARP1, JNM1, NIP100 and ARP10. Dynactin comprises a short rod of ARP1 polymers attached to ARP10 at its pointed-end and probably associated with the capping protein at its barbed-end. The rod structure is implicated in dynein cargo binding. A sidearm formed by NIP100 projects from the ARP1 filament and is implicated in motor binding. Interacts with ARP1.

It is found in the cytoplasm. Its subcellular location is the cytoskeleton. Functionally, component of the dynactin complex which assists cytoplasmic dynein by increasing its processivity and by regulation of its cargo binding. The dynactin complex is required for the spindle translocation late in anaphase and is involved in a cell wall synthesis checkpoint. JNM1 is associated with the rod and links it to the projecting sidearm. Required for proper nuclear migration during the mitotic cell cycle and for astral microtubule development. This is Nuclear migration protein JNM1 (JNM1) from Saccharomyces cerevisiae (strain ATCC 204508 / S288c) (Baker's yeast).